Here is a 211-residue protein sequence, read N- to C-terminus: Envelope protein UL45 homolog (211 aa).

The Intravirion segment spans residues 1–46 (MMSPTPEDDRDLVVVRGRLRMMDNGAEHDRERRSYTAWPHLCCGCT). Residues 47–67 (IGIILTMFVIATTLLLASLFA) form a helical; Signal-anchor for type II membrane protein membrane-spanning segment. The Virion surface portion of the chain corresponds to 68–211 (FSYMSLESGT…SSILSNAIMK (144 aa)). 2 N-linked (GlcNAc...) asparagine; by host glycosylation sites follow: asparagine 96 and asparagine 133.

It belongs to the herpesviridae HHV-1 UL45 family.

It is found in the virion membrane. The polypeptide is Envelope protein UL45 homolog (UL45H) (Gallid herpesvirus 2 (strain bc-1) (GaHV-2)).